We begin with the raw amino-acid sequence, 705 residues long: Lethal(3)malignant brain tumor-like protein 2 (705 aa).

Positions 1 to 84 (MEKPPSIEET…GTPRSLDGSG (84 aa)) are disordered. Ser-13 is modified (phosphoserine). Over residues 15-25 (PMEEEEDDDLE) the composition is skewed to acidic residues. A compositionally biased stretch (low complexity) spans 38 to 49 (SSVGSESSSYLE). A compositionally biased stretch (acidic residues) spans 50-60 (ESSEAENEDRE). Ser-67 bears the Phosphoserine mark. Thr-76 carries the phosphothreonine modification. Residues 81 to 116 (DGSGSEPAVCEMCGIVGTREAFFSKTKRFCSVSCSR) form an FCS-type zinc finger. Residues Cys-90, Cys-93, Cys-110, and Cys-114 each contribute to the Zn(2+) site. MBT repeat units follow at residues 179 to 283 (FDWG…LVPP), 291 to 391 (TDWK…IKMS), 397 to 500 (MAHH…LTPP), and 508 to 604 (FNWE…LQPP). The residue at position 338 (Ser-338) is a Phosphoserine. Residue Lys-405 forms a Glycyl lysine isopeptide (Lys-Gly) (interchain with G-Cter in SUMO2) linkage. Positions 608–705 (EPATPLKAKE…VENIKQETDD (98 aa)) are disordered. Residues 619–634 (TKKKKKQFGKKRKRIP) show a composition bias toward basic residues. Glycyl lysine isopeptide (Lys-Gly) (interchain with G-Cter in SUMO2) cross-links involve residues Lys-647, Lys-659, and Lys-675. Phosphoserine is present on residues Ser-683, Ser-688, and Ser-689. Lys-700 participates in a covalent cross-link: Glycyl lysine isopeptide (Lys-Gly) (interchain with G-Cter in SUMO1); alternate. Lys-700 is covalently cross-linked (Glycyl lysine isopeptide (Lys-Gly) (interchain with G-Cter in SUMO2); alternate).

In terms of assembly, part of the E2F6.com-1 complex in G0 phase composed of E2F6, MGA, MAX, TFDP1, CBX3, BAT8, EUHMTASE1, RING1, RNF2, MBLR, BAT8 and YAF2.

It localises to the nucleus. Putative Polycomb group (PcG) protein. PcG proteins maintain the transcriptionally repressive state of genes, probably via a modification of chromatin, rendering it heritably changed in its expressibility. Its association with a chromatin-remodeling complex suggests that it may contribute to prevent expression of genes that trigger the cell into mitosis. Binds to monomethylated and dimethylated 'Lys-20' on histone H4. Binds histone H3 peptides that are monomethylated or dimethylated on 'Lys-4', 'Lys-9' or 'Lys-27'. This is Lethal(3)malignant brain tumor-like protein 2 (L3MBTL2) from Pongo abelii (Sumatran orangutan).